Reading from the N-terminus, the 624-residue chain is Ceramide transfer protein (624 aa).

Residues Met1–Gly11 show a composition bias toward polar residues. The interval Met1–Val24 is disordered. The 95-residue stretch at Pro23–Thr117 folds into the PH domain. Phosphoserine is present on Ser126. Ser132 is modified (phosphoserine; by PKD). Ser135 is subject to Phosphoserine. Residues Ile263–His303 are a coiled coil. Ser315 carries the phosphoserine modification. An FFAT motif is present at residues Glu321–Glu327. At Tyr372 the chain carries Phosphotyrosine. Residues Ser373, Ser377, and Ser380 each carry the phosphoserine modification. In terms of domain architecture, START spans Asp389–Ala618. Glu472, Gln493, Asn530, and Tyr579 together coordinate an N-acylsphing-4-enine.

As to quaternary structure, interacts with VAPA and VAPB. Interaction with VAPB is less efficient than with VAPA. Interacts (via FFAT motif) with MOSPD2 (via MSP domain). In terms of processing, phosphorylation on Ser-132 decreases the affinity toward phosphatidylinositol 4-phosphate at Golgi membranes and reduces ceramide transfer activity. Inactivated by hyperphosphorylation of serine residues by CSNK1G2/CK1 that triggers dissociation from the Golgi complex, thus down-regulating ER-to-Golgi transport of ceramide and sphingomyelin synthesis. As to expression, widely expressed.

It is found in the cytoplasm. Its subcellular location is the golgi apparatus. The protein localises to the endoplasmic reticulum. It carries out the reaction N-hexadecanoylsphing-4-enine(in) = N-hexadecanoylsphing-4-enine(out). Functionally, shelters ceramides and diacylglycerol lipids inside its START domain and mediates the intracellular trafficking of ceramides and diacylglycerol lipids in a non-vesicular manner. The protein is Ceramide transfer protein of Homo sapiens (Human).